Consider the following 227-residue polypeptide: Cytochrome c oxidase subunit 2 (227 aa).

The Mitochondrial intermembrane portion of the chain corresponds to 1–14 (MAYPFELGFQDATS). The chain crosses the membrane as a helical span at residues 15–45 (PIMEELLHFHDHTLMIVFLISSLVLYIISLM). Over 46 to 59 (LTTKLTHTSTMDAQ) the chain is Mitochondrial matrix. A helical transmembrane segment spans residues 60 to 87 (EVETIWTILPAIILILIALPSLRILYMM). The Mitochondrial intermembrane segment spans residues 88–227 (DEINDPSLTV…HFENWSSSML (140 aa)). Cu cation-binding residues include His-161, Cys-196, Glu-198, Cys-200, His-204, and Met-207. Glu-198 is a binding site for Mg(2+).

The protein belongs to the cytochrome c oxidase subunit 2 family. In terms of assembly, component of the cytochrome c oxidase (complex IV, CIV), a multisubunit enzyme composed of 14 subunits. The complex is composed of a catalytic core of 3 subunits MT-CO1, MT-CO2 and MT-CO3, encoded in the mitochondrial DNA, and 11 supernumerary subunits COX4I, COX5A, COX5B, COX6A, COX6B, COX6C, COX7A, COX7B, COX7C, COX8 and NDUFA4, which are encoded in the nuclear genome. The complex exists as a monomer or a dimer and forms supercomplexes (SCs) in the inner mitochondrial membrane with NADH-ubiquinone oxidoreductase (complex I, CI) and ubiquinol-cytochrome c oxidoreductase (cytochrome b-c1 complex, complex III, CIII), resulting in different assemblies (supercomplex SCI(1)III(2)IV(1) and megacomplex MCI(2)III(2)IV(2)). Found in a complex with TMEM177, COA6, COX18, COX20, SCO1 and SCO2. Interacts with TMEM177 in a COX20-dependent manner. Interacts with COX20. Interacts with COX16. Cu cation serves as cofactor.

It is found in the mitochondrion inner membrane. It carries out the reaction 4 Fe(II)-[cytochrome c] + O2 + 8 H(+)(in) = 4 Fe(III)-[cytochrome c] + 2 H2O + 4 H(+)(out). Its function is as follows. Component of the cytochrome c oxidase, the last enzyme in the mitochondrial electron transport chain which drives oxidative phosphorylation. The respiratory chain contains 3 multisubunit complexes succinate dehydrogenase (complex II, CII), ubiquinol-cytochrome c oxidoreductase (cytochrome b-c1 complex, complex III, CIII) and cytochrome c oxidase (complex IV, CIV), that cooperate to transfer electrons derived from NADH and succinate to molecular oxygen, creating an electrochemical gradient over the inner membrane that drives transmembrane transport and the ATP synthase. Cytochrome c oxidase is the component of the respiratory chain that catalyzes the reduction of oxygen to water. Electrons originating from reduced cytochrome c in the intermembrane space (IMS) are transferred via the dinuclear copper A center (CU(A)) of subunit 2 and heme A of subunit 1 to the active site in subunit 1, a binuclear center (BNC) formed by heme A3 and copper B (CU(B)). The BNC reduces molecular oxygen to 2 water molecules using 4 electrons from cytochrome c in the IMS and 4 protons from the mitochondrial matrix. The chain is Cytochrome c oxidase subunit 2 (MT-CO2) from Neotamias bulleri (Buller's chipmunk).